Consider the following 562-residue polypeptide: Dihydroxy-acid dehydratase (562 aa).

A Mg(2+)-binding site is contributed by aspartate 78. Cysteine 119 contributes to the [2Fe-2S] cluster binding site. Aspartate 120 and lysine 121 together coordinate Mg(2+). The residue at position 121 (lysine 121) is an N6-carboxylysine. Cysteine 192 contributes to the [2Fe-2S] cluster binding site. Residue glutamate 449 coordinates Mg(2+). The Proton acceptor role is filled by serine 475.

It belongs to the IlvD/Edd family. As to quaternary structure, homodimer. The cofactor is [2Fe-2S] cluster. Mg(2+) is required as a cofactor.

The enzyme catalyses (2R)-2,3-dihydroxy-3-methylbutanoate = 3-methyl-2-oxobutanoate + H2O. It carries out the reaction (2R,3R)-2,3-dihydroxy-3-methylpentanoate = (S)-3-methyl-2-oxopentanoate + H2O. It functions in the pathway amino-acid biosynthesis; L-isoleucine biosynthesis; L-isoleucine from 2-oxobutanoate: step 3/4. The protein operates within amino-acid biosynthesis; L-valine biosynthesis; L-valine from pyruvate: step 3/4. Functionally, functions in the biosynthesis of branched-chain amino acids. Catalyzes the dehydration of (2R,3R)-2,3-dihydroxy-3-methylpentanoate (2,3-dihydroxy-3-methylvalerate) into 2-oxo-3-methylpentanoate (2-oxo-3-methylvalerate) and of (2R)-2,3-dihydroxy-3-methylbutanoate (2,3-dihydroxyisovalerate) into 2-oxo-3-methylbutanoate (2-oxoisovalerate), the penultimate precursor to L-isoleucine and L-valine, respectively. The polypeptide is Dihydroxy-acid dehydratase (Aliarcobacter butzleri (strain RM4018) (Arcobacter butzleri)).